Here is a 295-residue protein sequence, read N- to C-terminus: MSKDIATPGKTTEILKKYGFLFKKSLGQNFLIDSNILTRITDTAGISKETNVIEIGPGIGALTEQLAKTANEVVAFEIDQRLLPILDDTLSAYNNIQVVHGDVLKADVEEVITQQFSKSELPLKIVANLPYYVTTPIILKLLHDNIPADSMTFMLQKEVADRISAVPSTKSYGSLTIAIQFYMEAELAFIVPKTVFMPQPNVDSAVIHLKRRKEPLAKVNDEEFFFEVTRASFAQRRKTLWNNLASKFPALKPRKDELVEGLNAIGIDLIRRGETLDIPEFAKLSNFLADFLEEK.

Asn29, Leu31, Gly56, Glu77, Asp102, and Asn128 together coordinate S-adenosyl-L-methionine.

Belongs to the class I-like SAM-binding methyltransferase superfamily. rRNA adenine N(6)-methyltransferase family. RsmA subfamily.

It localises to the cytoplasm. It catalyses the reaction adenosine(1518)/adenosine(1519) in 16S rRNA + 4 S-adenosyl-L-methionine = N(6)-dimethyladenosine(1518)/N(6)-dimethyladenosine(1519) in 16S rRNA + 4 S-adenosyl-L-homocysteine + 4 H(+). Functionally, specifically dimethylates two adjacent adenosines (A1518 and A1519) in the loop of a conserved hairpin near the 3'-end of 16S rRNA in the 30S particle. May play a critical role in biogenesis of 30S subunits. This chain is Ribosomal RNA small subunit methyltransferase A, found in Listeria welshimeri serovar 6b (strain ATCC 35897 / DSM 20650 / CCUG 15529 / CIP 8149 / NCTC 11857 / SLCC 5334 / V8).